Consider the following 109-residue polypeptide: UPF0122 protein BH2485 (109 aa).

The protein belongs to the UPF0122 family.

Might take part in the signal recognition particle (SRP) pathway. This is inferred from the conservation of its genetic proximity to ftsY/ffh. May be a regulatory protein. The protein is UPF0122 protein BH2485 of Halalkalibacterium halodurans (strain ATCC BAA-125 / DSM 18197 / FERM 7344 / JCM 9153 / C-125) (Bacillus halodurans).